A 792-amino-acid polypeptide reads, in one-letter code: Xaa-Pro dipeptidyl-peptidase (792 aa).

Catalysis depends on charge relay system residues serine 363, aspartate 482, and histidine 513.

It belongs to the peptidase S15 family. In terms of assembly, homodimer.

It is found in the cytoplasm. It catalyses the reaction Hydrolyzes Xaa-Pro-|- bonds to release unblocked, N-terminal dipeptides from substrates including Ala-Pro-|-p-nitroanilide and (sequentially) Tyr-Pro-|-Phe-Pro-|-Gly-Pro-|-Ile.. Removes N-terminal dipeptides sequentially from polypeptides having unsubstituted N-termini provided that the penultimate residue is proline. The protein is Xaa-Pro dipeptidyl-peptidase of Lactobacillus delbrueckii subsp. bulgaricus (strain ATCC 11842 / DSM 20081 / BCRC 10696 / JCM 1002 / NBRC 13953 / NCIMB 11778 / NCTC 12712 / WDCM 00102 / Lb 14).